The following is a 417-amino-acid chain: Diphosphomevalonate decarboxylase 1 (417 aa).

22-25 (YWGK) serves as a coordination point for (R)-5-diphosphomevalonate. The short motif at 39 to 47 (RVSLDPDHL) is the Peroxisomal targeting signal PTS2 element. (R)-5-diphosphomevalonate-binding positions include Arg77, 160–165 (SGSACR), and Thr216.

It belongs to the diphosphomevalonate decarboxylase family. As to quaternary structure, homodimer.

It localises to the peroxisome. It carries out the reaction (R)-5-diphosphomevalonate + ATP = isopentenyl diphosphate + ADP + phosphate + CO2. The protein operates within isoprenoid biosynthesis; isopentenyl diphosphate biosynthesis via mevalonate pathway; isopentenyl diphosphate from (R)-mevalonate: step 3/3. In terms of biological role, performs the first committed step in the biosynthesis of isoprene-containing compounds such as sterols and terpenoids. Component of the triterpene saponins (e.g. ginsenosides or panaxosides) and phytosterols biosynthetic pathways. Catalyzes the conversion of mevalonate diphosphate to isopentenyl diphosphate (IPP). This Panax ginseng (Korean ginseng) protein is Diphosphomevalonate decarboxylase 1.